A 464-amino-acid polypeptide reads, in one-letter code: Siroheme synthase (464 aa).

Residues 1 to 203 (MEFLPLFHNL…GQGDEAERLL (203 aa)) are precorrin-2 dehydrogenase /sirohydrochlorin ferrochelatase. Residues 22 to 23 (EI) and 43 to 44 (PQ) contribute to the NAD(+) site. Ser-128 bears the Phosphoserine mark. Positions 216–464 (GEVYLVGAGP…KWFEGAQSQV (249 aa)) are uroporphyrinogen-III C-methyltransferase. An S-adenosyl-L-methionine-binding site is contributed by Pro-225. Asp-248 acts as the Proton acceptor in catalysis. Lys-270 (proton donor) is an active-site residue. Residues 301–303 (GGD), Ile-306, 331–332 (TA), Met-383, and Gly-412 contribute to the S-adenosyl-L-methionine site.

In the N-terminal section; belongs to the precorrin-2 dehydrogenase / sirohydrochlorin ferrochelatase family. The protein in the C-terminal section; belongs to the precorrin methyltransferase family.

It catalyses the reaction uroporphyrinogen III + 2 S-adenosyl-L-methionine = precorrin-2 + 2 S-adenosyl-L-homocysteine + H(+). The catalysed reaction is precorrin-2 + NAD(+) = sirohydrochlorin + NADH + 2 H(+). The enzyme catalyses siroheme + 2 H(+) = sirohydrochlorin + Fe(2+). It functions in the pathway cofactor biosynthesis; adenosylcobalamin biosynthesis; precorrin-2 from uroporphyrinogen III: step 1/1. Its pathway is cofactor biosynthesis; adenosylcobalamin biosynthesis; sirohydrochlorin from precorrin-2: step 1/1. It participates in porphyrin-containing compound metabolism; siroheme biosynthesis; precorrin-2 from uroporphyrinogen III: step 1/1. The protein operates within porphyrin-containing compound metabolism; siroheme biosynthesis; siroheme from sirohydrochlorin: step 1/1. It functions in the pathway porphyrin-containing compound metabolism; siroheme biosynthesis; sirohydrochlorin from precorrin-2: step 1/1. Functionally, multifunctional enzyme that catalyzes the SAM-dependent methylations of uroporphyrinogen III at position C-2 and C-7 to form precorrin-2 via precorrin-1. Then it catalyzes the NAD-dependent ring dehydrogenation of precorrin-2 to yield sirohydrochlorin. Finally, it catalyzes the ferrochelation of sirohydrochlorin to yield siroheme. This is Siroheme synthase from Pseudomonas fluorescens (strain SBW25).